Here is a 346-residue protein sequence, read N- to C-terminus: MPKIDPETQKLYDEINGMIQKFKDDQKSKADCTLADKCGDMGDVPKIRFSSKKILKGHINKVNSVHFAGDSRHCVTGSLDGKLIIWDTWTANKVQIIPLRSAWVMTVAFSPSGNFVACGGMDNQCTVYDVNNRDASGVAKMVKELMGYEGFLSSCRFLDDGHLITGSGDMKICHWDLEKGVKTMDFNGHAGDIAGLSLSPDMKTYITGSVDKTAKLWDVREEGHKQMFFGHDMDVSSVCYHPSGFGFASCSEDQTARMYDLRADQQIAQYEPPQKNTGFTSCALSTSGRYLMCGGIEGNVHSWDTMKQRHTGTLSGHENRITCISLCPNGMCLASTSWDQQVRLWL.

WD repeat units lie at residues 57–96 (GHIN…KVQI), 99–138 (LRSA…ASGV), 147–185 (GYEG…KTMD), 188–227 (GHAG…HKQM), 230–269 (GHDM…QIAQ), 274–313 (QKNT…HTGT), and 316–346 (GHEN…RLWL).

The protein belongs to the WD repeat G protein beta family. In terms of assembly, g proteins are composed of 3 units, alpha, beta and gamma. Interacts with Ggamma30A/Guanine nucleotide-binding protein subunit gamma-e. Expressed exclusively in photoreceptor cells in the compound eye (at protein level).

Its subcellular location is the cytoplasm. The protein localises to the cell projection. It localises to the axon. It is found in the rhabdomere. Its function is as follows. Guanine nucleotide-binding proteins (G proteins) are involved as a modulator or transducer in various transmembrane signaling systems. The beta and gamma chains are required for the GTPase activity, for replacement of GDP by GTP, and for G protein-effector interaction. The polypeptide is Guanine nucleotide-binding protein subunit beta-2 (Gbeta76C) (Drosophila melanogaster (Fruit fly)).